We begin with the raw amino-acid sequence, 253 residues long: Major prion protein (253 aa).

The N-terminal stretch at 1-22 (MANLGCWMLVLFVATWSDLGLC) is a signal peptide. Residues 23-230 (KKRPKPGGWN…ESQAYYQRGS (208 aa)) form an interaction with GRB2, ERI3 and SYN1 region. The disordered stretch occupies residues 26-108 (PKPGGWNTGG…WNKPSKPKTN (83 aa)). 5 consecutive repeat copies span residues 51-59 (PQGGGGWGQ), 60-67 (PHGGGWGQ), 68-75 (PHGGGWGQ), 76-83 (PHGGGWGQ), and 84-91 (PHGGGWGQ). The tract at residues 51-91 (PQGGGGWGQPHGGGWGQPHGGGWGQPHGGGWGQPHGGGWGQ) is 5 X 8 AA tandem repeats of P-H-G-G-G-W-G-Q. Residues 52–95 (QGGGGWGQPHGGGWGQPHGGGWGQPHGGGWGQPHGGGWGQGGGT) show a composition bias toward gly residues. Positions 61, 62, 63, 69, 70, 71, 77, 78, 79, 85, 86, and 87 each coordinate Cu(2+). A disulfide bridge links Cys179 with Cys214. N-linked (GlcNAc...) asparagine glycans are attached at residues Asn181 and Asn197. Ser230 carries GPI-anchor amidated serine lipidation. Positions 231-253 (SMVLFSSPPVILLISFLIFLIVG) are cleaved as a propeptide — removed in mature form.

The protein belongs to the prion family. In terms of assembly, monomer and homodimer. Has a tendency to aggregate into amyloid fibrils containing a cross-beta spine, formed by a steric zipper of superposed beta-strands. Soluble oligomers may represent an intermediate stage on the path to fibril formation. Copper binding may promote oligomerization. Interacts with GRB2, APP, ERI3/PRNPIP and SYN1. Mislocalized cytosolically exposed PrP interacts with MGRN1; this interaction alters MGRN1 subcellular location and causes lysosomal enlargement. Interacts with KIAA1191.

It localises to the cell membrane. The protein resides in the golgi apparatus. Its function is as follows. Its primary physiological function is unclear. Has cytoprotective activity against internal or environmental stresses. May play a role in neuronal development and synaptic plasticity. May be required for neuronal myelin sheath maintenance. May play a role in iron uptake and iron homeostasis. Soluble oligomers are toxic to cultured neuroblastoma cells and induce apoptosis (in vitro). Association with GPC1 (via its heparan sulfate chains) targets PRNP to lipid rafts. Also provides Cu(2+) or Zn(2+) for the ascorbate-mediated GPC1 deaminase degradation of its heparan sulfate side chains. The sequence is that of Major prion protein (PRNP) from Hylobates lar (Lar gibbon).